Consider the following 349-residue polypeptide: Cytoplasmic tRNA 2-thiolation protein 2 (349 aa).

Belongs to the CTU2/NCS2 family.

It is found in the cytoplasm. It functions in the pathway tRNA modification; 5-methoxycarbonylmethyl-2-thiouridine-tRNA biosynthesis. In terms of biological role, plays a central role in 2-thiolation of mcm(5)S(2)U at tRNA wobble positions of tRNA(Lys), tRNA(Glu) and tRNA(Gln). May act by forming a heterodimer with tut-1/ctu-1 that ligates sulfur from thiocarboxylated urm-1 onto the uridine of tRNAs at wobble position. This is Cytoplasmic tRNA 2-thiolation protein 2 from Caenorhabditis briggsae.